A 298-amino-acid polypeptide reads, in one-letter code: Bifunctional protein FolD (298 aa).

NADP(+) is bound by residues 165 to 167 (GRS), S190, and I231.

It belongs to the tetrahydrofolate dehydrogenase/cyclohydrolase family. In terms of assembly, homodimer.

The enzyme catalyses (6R)-5,10-methylene-5,6,7,8-tetrahydrofolate + NADP(+) = (6R)-5,10-methenyltetrahydrofolate + NADPH. It catalyses the reaction (6R)-5,10-methenyltetrahydrofolate + H2O = (6R)-10-formyltetrahydrofolate + H(+). It functions in the pathway one-carbon metabolism; tetrahydrofolate interconversion. Catalyzes the oxidation of 5,10-methylenetetrahydrofolate to 5,10-methenyltetrahydrofolate and then the hydrolysis of 5,10-methenyltetrahydrofolate to 10-formyltetrahydrofolate. This Prochlorococcus marinus (strain MIT 9301) protein is Bifunctional protein FolD.